The primary structure comprises 426 residues: Mannose-6-phosphate isomerase (426 aa).

The Zn(2+) site is built by Gln-112, His-114, Glu-139, and His-277. Residue Arg-296 is part of the active site.

Belongs to the mannose-6-phosphate isomerase type 1 family. It depends on Zn(2+) as a cofactor.

The protein localises to the cytoplasm. It carries out the reaction D-mannose 6-phosphate = D-fructose 6-phosphate. It participates in nucleotide-sugar biosynthesis; GDP-alpha-D-mannose biosynthesis; alpha-D-mannose 1-phosphate from D-fructose 6-phosphate: step 1/2. Its function is as follows. Involved in the synthesis of the GDP-mannose and dolichol-phosphate-mannose required for a number of critical mannosyl transfer reactions. This Ogataea parapolymorpha (strain ATCC 26012 / BCRC 20466 / JCM 22074 / NRRL Y-7560 / DL-1) (Yeast) protein is Mannose-6-phosphate isomerase (PMI40).